The primary structure comprises 576 residues: MSSTVIILIVVLLVILVAFYAFAILMRKKTEDRILALEERKESLFDLPVQEEIDSVKKMHLVGQSQTIFREWNQKWLDLSSNSFADLEEHIFEAEQLNDSFHFFRARESVADSEAQIELMEGDVEGIRQGVAQLVEQEKRNSNKIQESLDLYDNLRSDIADNADLYGTVITELEKHLANIETEFSQFVTLNSTGDPIEAAEVLETAEEHTIALRAITEQIPSFIKTIEKDVPKRLEELQEASDKFVAEEYILPDNVNIKERMDDLHDHLVESSSLLEQFELDRVEAELGLIQEKVEELYAIFEREYSARRNVEKRSSVLKEYIEHIRANNKNLLLEIDHVTQAYILSGNEKGYVRGYQEHLESLDSDVDEILGNIQAKTMPYSILSRRVNSVVNALEDIEKNQIKISDTLTGLRDEERAAQEIAERFDSELRTIKRYVEKCNLPGLPKDYLDLFFTTGDRVQNLFKELGRVRINIDTINHLVDVSTEDMHVLKEATTNLTDHAVLAEQLIQYANRYKAANEQVAQGISRALQLFENSRDYDGSFDEISKTLELVEPGAASRISGVYFKNKPTPDYL.

Residues Met1–Ile7 lie on the Extracellular side of the membrane. A helical transmembrane segment spans residues Leu8–Met26. The Cytoplasmic segment spans residues Arg27–Leu576. 2 coiled-coil regions span residues Arg105–Leu134 and Glu277–Ile301.

The protein belongs to the EzrA family.

Its subcellular location is the cell membrane. Functionally, negative regulator of FtsZ ring formation; modulates the frequency and position of FtsZ ring formation. Inhibits FtsZ ring formation at polar sites. Interacts either with FtsZ or with one of its binding partners to promote depolymerization. In Lactococcus lactis subsp. lactis (strain IL1403) (Streptococcus lactis), this protein is Septation ring formation regulator EzrA.